Consider the following 299-residue polypeptide: GTPase Era (299 aa).

Residues 5–172 (KSGFVSIIGR…IDVLKTYLPE (168 aa)) form the Era-type G domain. A G1 region spans residues 13–20 (GRPNVGKS). Residue 13-20 (GRPNVGKS) participates in GTP binding. Residues 39 to 43 (QTTRN) form a G2 region. Residues 60 to 63 (DTPG) are G3. GTP contacts are provided by residues 60–64 (DTPGI) and 122–125 (NKID). The tract at residues 122–125 (NKID) is G4. The interval 151–153 (ISA) is G5. One can recognise a KH type-2 domain in the interval 203–280 (TSEEIPHAIG…YLELWVKVQR (78 aa)).

This sequence belongs to the TRAFAC class TrmE-Era-EngA-EngB-Septin-like GTPase superfamily. Era GTPase family. As to quaternary structure, monomer.

Its subcellular location is the cytoplasm. It localises to the cell membrane. In terms of biological role, an essential GTPase that binds both GDP and GTP, with rapid nucleotide exchange. Plays a role in 16S rRNA processing and 30S ribosomal subunit biogenesis and possibly also in cell cycle regulation and energy metabolism. The polypeptide is GTPase Era (Staphylococcus aureus (strain NCTC 8325 / PS 47)).